The primary structure comprises 383 residues: Acetylornithine deacetylase (383 aa).

Zn(2+) is bound at residue His-80. Asp-82 is an active-site residue. Position 112 (Asp-112) interacts with Zn(2+). The active site involves Glu-144. Residues Glu-145, Glu-169, and His-355 each contribute to the Zn(2+) site.

This sequence belongs to the peptidase M20A family. ArgE subfamily. In terms of assembly, homodimer. Zn(2+) is required as a cofactor. Requires Co(2+) as cofactor. The cofactor is glutathione.

The protein localises to the cytoplasm. The catalysed reaction is N(2)-acetyl-L-ornithine + H2O = L-ornithine + acetate. Its pathway is amino-acid biosynthesis; L-arginine biosynthesis; L-ornithine from N(2)-acetyl-L-ornithine (linear): step 1/1. Catalyzes the hydrolysis of the amide bond of N(2)-acetylated L-amino acids. Cleaves the acetyl group from N-acetyl-L-ornithine to form L-ornithine, an intermediate in L-arginine biosynthesis pathway, and a branchpoint in the synthesis of polyamines. The sequence is that of Acetylornithine deacetylase from Salmonella heidelberg (strain SL476).